The primary structure comprises 55 residues: Large ribosomal subunit protein bL33B (55 aa).

This sequence belongs to the bacterial ribosomal protein bL33 family.

The polypeptide is Large ribosomal subunit protein bL33B (Salinispora arenicola (strain CNS-205)).